The primary structure comprises 1210 residues: DNA-directed RNA polymerase II subunit RPB2 (1210 aa).

Mg(2+) is bound at residue Asp-826. Residues Cys-1152, Cys-1155, Cys-1170, and Cys-1173 each coordinate Zn(2+). The segment at Cys-1152–Cys-1173 adopts a C4-type zinc-finger fold.

The protein belongs to the RNA polymerase beta chain family. Component of the RNA polymerase II (Pol II) complex consisting of 12 subunits.

It is found in the nucleus. It catalyses the reaction RNA(n) + a ribonucleoside 5'-triphosphate = RNA(n+1) + diphosphate. Functionally, DNA-dependent RNA polymerase catalyzes the transcription of DNA into RNA using the four ribonucleoside triphosphates as substrates. Second largest component of RNA polymerase II which synthesizes mRNA precursors and many functional non-coding RNAs. Proposed to contribute to the polymerase catalytic activity and forms the polymerase active center together with the largest subunit. Pol II is the central component of the basal RNA polymerase II transcription machinery. It is composed of mobile elements that move relative to each other. RPB2 is part of the core element with the central large cleft, the clamp element that moves to open and close the cleft and the jaws that are thought to grab the incoming DNA template. The chain is DNA-directed RNA polymerase II subunit RPB2 (rpb2) from Schizosaccharomyces pombe (strain 972 / ATCC 24843) (Fission yeast).